A 750-amino-acid polypeptide reads, in one-letter code: Serine/threonine-protein kinase PknG (750 aa).

Residues 1-66 (MAKASETERS…PQDRMATTSR (66 aa)) are disordered. A compositionally biased stretch (polar residues) spans 17 to 34 (ADAQTATSATVRPLSTQA). The 246-residue stretch at 151 to 396 (YEVKGCIAHG…EMSAQLTGVL (246 aa)) folds into the Protein kinase domain. ATP-binding positions include 157 to 165 (IAHGGLGWI) and lysine 181. The active-site Proton acceptor is the aspartate 276.

It belongs to the protein kinase superfamily. Ser/Thr protein kinase family. Autophosphorylated.

It carries out the reaction L-seryl-[protein] + ATP = O-phospho-L-seryl-[protein] + ADP + H(+). The catalysed reaction is L-threonyl-[protein] + ATP = O-phospho-L-threonyl-[protein] + ADP + H(+). In Mycobacterium bovis (strain ATCC BAA-935 / AF2122/97), this protein is Serine/threonine-protein kinase PknG (pknG).